A 246-amino-acid polypeptide reads, in one-letter code: Uridylate kinase (246 aa).

18–21 (KVSG) lines the ATP pocket. Glycine 60 contacts UMP. Residues glycine 61 and arginine 65 each coordinate ATP. UMP-binding positions include aspartate 80 and 141 to 148 (TGNPFFTT). ATP contacts are provided by threonine 168, glutamine 169, tyrosine 174, and aspartate 177.

It belongs to the UMP kinase family. As to quaternary structure, homohexamer.

It localises to the cytoplasm. It carries out the reaction UMP + ATP = UDP + ADP. It participates in pyrimidine metabolism; CTP biosynthesis via de novo pathway; UDP from UMP (UMPK route): step 1/1. With respect to regulation, inhibited by UTP. Functionally, catalyzes the reversible phosphorylation of UMP to UDP. The protein is Uridylate kinase of Gluconobacter oxydans (strain 621H) (Gluconobacter suboxydans).